The following is a 72-amino-acid chain: Large ribosomal subunit protein uL29 (72 aa).

This sequence belongs to the universal ribosomal protein uL29 family.

This is Large ribosomal subunit protein uL29 from Rhodopirellula baltica (strain DSM 10527 / NCIMB 13988 / SH1).